Here is a 150-residue protein sequence, read N- to C-terminus: Small ribosomal subunit protein uS7c (150 aa).

Belongs to the universal ribosomal protein uS7 family. In terms of assembly, part of the 30S ribosomal subunit.

The protein localises to the plastid. Its subcellular location is the chloroplast. Functionally, one of the primary rRNA binding proteins, it binds directly to 16S rRNA where it nucleates assembly of the head domain of the 30S subunit. The protein is Small ribosomal subunit protein uS7c (rps7) of Huperzia lucidula (Shining clubmoss).